Reading from the N-terminus, the 173-residue chain is Spermidine N(1)-acetyltransferase (173 aa).

Positions 5–162 constitute an N-acetyltransferase domain; sequence LTLRALERGD…GRYQDVKRMY (158 aa). Spermine is bound by residues Met28, Glu33, Glu41, and 49-52; that span reads HIHD. Glu33 is a Mg(2+) binding site. Spermidine contacts are provided by Glu33 and Glu41. Glu75 lines the Mg(2+) pocket. 84–86 serves as a coordination point for spermine; it reads EFQ. Residues 87–89, 94–100, and 127–136 contribute to the acetyl-CoA site; these read III, QGKGFAR, and NPKAVHLYEE. Residue Tyr134 is the Proton donor of the active site.

This sequence belongs to the acetyltransferase family. As to quaternary structure, homododecamer; dimer of hexamers. Exists in solution in a variety of protein homooligomeric states including dodecamers in an open state. The presence of the polyamines spermidine or spermine shifts the equilibrium to dodecamers and induces the formation of the closed, symmetric dodecamers.

It is found in the cytoplasm. The catalysed reaction is an alkane-alpha,omega-diamine + acetyl-CoA = an N-acetylalkane-alpha,omega-diamine + CoA + H(+). It carries out the reaction spermidine + acetyl-CoA = N(1)-acetylspermidine + CoA + H(+). The enzyme catalyses spermidine + acetyl-CoA = N(8)-acetylspermidine + CoA + H(+). It catalyses the reaction spermine + acetyl-CoA = N(1)-acetylspermine + CoA + H(+). It participates in amine and polyamine degradation; spermidine degradation. Its pathway is amine and polyamine degradation; spermine degradation. Its activity is regulated as follows. Allosterically regulated by polyamines. Polyamines trigger conformational changes and induce the symmetric closed dodecameric state of the protein when they bind to their allosteric sites. Functionally, involved in the protection against polyamine toxicity by regulating their concentration. Catalyzes the transfer of an acetyl group from acetyl coenzyme A (AcCoA) to the primary amino groups of spermidine to yield N(1)- and N(8)-acetylspermidine. It can use polyamines such as spermine and N(1)-acetylspermine, but not putrescine or cadaverine. The protein is Spermidine N(1)-acetyltransferase (speG) of Vibrio cholerae serotype O1 (strain ATCC 39315 / El Tor Inaba N16961).